Reading from the N-terminus, the 856-residue chain is Genome polyprotein (856 aa).

Positions K141–F284 constitute a Peptidase S30 domain. Catalysis depends on for P1 proteinase activity residues H192, D201, and S235. Residues P592–K594 carry the Involved in virions binding and aphid transmission motif. The Peptidase C6 domain occupies L618 to G740. Catalysis depends on for helper component proteinase activity residues C626 and H699.

The protein belongs to the potyviridae genome polyprotein family. Genome polyprotein of potyviruses undergoes post-translational proteolytic processing by the main proteinase NIa-pro resulting in the production of at least ten individual proteins. The P1 proteinase and the HC-pro cleave only their respective C-termini autocatalytically. 6K1 is essential for proper proteolytic separation of P3 from CI.

It catalyses the reaction Hydrolyzes a Gly-|-Gly bond at its own C-terminus, commonly in the sequence -Tyr-Xaa-Val-Gly-|-Gly, in the processing of the potyviral polyprotein.. Functionally, required for aphid transmission and also has proteolytic activity. Only cleaves a Gly-Gly dipeptide at its own C-terminus. Interacts with virions and aphid stylets. Acts as a suppressor of RNA-mediated gene silencing, also known as post-transcriptional gene silencing (PTGS), a mechanism of plant viral defense that limits the accumulation of viral RNAs. May have RNA-binding activity. In Potato virus Y (strain C) (PVY), this protein is Genome polyprotein.